We begin with the raw amino-acid sequence, 442 residues long: Trigger factor (442 aa).

A PPIase FKBP-type domain is found at Gly-176–Pro-259.

Belongs to the FKBP-type PPIase family. Tig subfamily.

The protein localises to the cytoplasm. It carries out the reaction [protein]-peptidylproline (omega=180) = [protein]-peptidylproline (omega=0). Its function is as follows. Involved in protein export. Acts as a chaperone by maintaining the newly synthesized protein in an open conformation. Functions as a peptidyl-prolyl cis-trans isomerase. This is Trigger factor from Chlamydia trachomatis serovar L2 (strain ATCC VR-902B / DSM 19102 / 434/Bu).